We begin with the raw amino-acid sequence, 699 residues long: Polyribonucleotide nucleotidyltransferase (699 aa).

2 residues coordinate Mg(2+): aspartate 493 and aspartate 499. Residues 560–620 enclose the KH domain; sequence PLIANIEIDP…NKVNQAIEYI (61 aa). Residues 630 to 697 enclose the S1 motif domain; sequence GDMFEGKITR…DSGRIQLGKA (68 aa).

This sequence belongs to the polyribonucleotide nucleotidyltransferase family. The cofactor is Mg(2+).

It localises to the cytoplasm. It carries out the reaction RNA(n+1) + phosphate = RNA(n) + a ribonucleoside 5'-diphosphate. Involved in mRNA degradation. Catalyzes the phosphorolysis of single-stranded polyribonucleotides processively in the 3'- to 5'-direction. This is Polyribonucleotide nucleotidyltransferase from Thermosipho melanesiensis (strain DSM 12029 / CIP 104789 / BI429).